Consider the following 232-residue polypeptide: MNKYLAEAFGTFWLVLGGCGSAVLAAGFPDVGIGLLGVALAFGLTVLTMAFAIGHISGCHLNPAVTVGLWAGGRFDTKDVAPYIIAQVIGGLIAGGILYVIATGQAGFDVVGSGFAANGYGEHSPGQYSMLAALVSEIVMTMMFLIVIMGATDKRAPQGFAPIAIGLCLTLIHLISIPVTNTSVNPARSTAVAMYVGDWAVSQLWLFWVAPIVGGVLGAVIYKNLLGKESND.

2 helical membrane passes run 8–28 (AFGTFWLVLGGCGSAVLAAGF) and 33–53 (IGLLGVALAFGLTVLTMAFAI). The short motif at 62 to 64 (NPA) is the NPA 1 element. The next 3 membrane-spanning stretches (helical) occupy residues 84 to 104 (IIAQVIGGLIAGGILYVIATG), 130 to 150 (MLAALVSEIVMTMMFLIVIMG), and 159 to 179 (GFAPIAIGLCLTLIHLISIPV). The NPA 2 motif lies at 185 to 187 (NPA). The chain crosses the membrane as a helical span at residues 201–221 (VSQLWLFWVAPIVGGVLGAVI).

Belongs to the MIP/aquaporin (TC 1.A.8) family. As to quaternary structure, homotetramer.

Its subcellular location is the cell inner membrane. The enzyme catalyses H2O(in) = H2O(out). Its function is as follows. Channel that permits osmotically driven movement of water in both directions. It is involved in the osmoregulation and in the maintenance of cell turgor during volume expansion in rapidly growing cells. It mediates rapid entry or exit of water in response to abrupt changes in osmolarity. The protein is Aquaporin Z of Vibrio parahaemolyticus serotype O3:K6 (strain RIMD 2210633).